Consider the following 230-residue polypeptide: Urease accessory protein UreF (230 aa).

Belongs to the UreF family. As to quaternary structure, ureD, UreF and UreG form a complex that acts as a GTP-hydrolysis-dependent molecular chaperone, activating the urease apoprotein by helping to assemble the nickel containing metallocenter of UreC. The UreE protein probably delivers the nickel.

The protein resides in the cytoplasm. Required for maturation of urease via the functional incorporation of the urease nickel metallocenter. The chain is Urease accessory protein UreF from Polynucleobacter asymbioticus (strain DSM 18221 / CIP 109841 / QLW-P1DMWA-1) (Polynucleobacter necessarius subsp. asymbioticus).